Here is a 523-residue protein sequence, read N- to C-terminus: Succinate-semialdehyde dehydrogenase, mitochondrial (523 aa).

The transit peptide at 1–35 (MATCFLLRSFWAARPALPPPGRFRPEPAGTPRRSY) directs the protein to the mitochondrion. The residue at position 74 (Lys-74) is an N6-acetyllysine. An N6-acetyllysine; alternate modification is found at Lys-114. N6-succinyllysine; alternate is present on Lys-114. Position 123 is an N6-succinyllysine (Lys-123). Lys-128 carries the post-translational modification N6-acetyllysine. N6-succinyllysine is present on Lys-172. NAD(+)-binding positions include Arg-201 and 216–219 (KPAE). Arg-201 contacts substrate. Lys-253 carries the post-translational modification N6-acetyllysine; alternate. Lys-253 carries the N6-succinyllysine; alternate modification. Residue 272–277 (GSTATG) coordinates NAD(+). Glu-294 (proton acceptor) is an active-site residue. Position 322 (Arg-322) interacts with substrate. Catalysis depends on Cys-328, which acts as the Nucleophile. Residues Cys-328 and Cys-330 are joined by a disulfide bond. N6-acetyllysine; alternate is present on Lys-347. Lys-347 is subject to N6-succinyllysine; alternate. Lys-353 bears the N6-acetyllysine mark. Position 390 is an N6-succinyllysine (Lys-390). N6-acetyllysine is present on Lys-399. Ser-403 is modified (phosphoserine). Ser-486 contacts substrate. Ser-487 bears the Phosphoserine mark.

It belongs to the aldehyde dehydrogenase family. As to quaternary structure, homotetramer.

Its subcellular location is the mitochondrion. The catalysed reaction is succinate semialdehyde + NAD(+) + H2O = succinate + NADH + 2 H(+). The protein operates within amino-acid degradation; 4-aminobutanoate degradation. Its activity is regulated as follows. Redox-regulated. Inhibited under oxydizing conditions. Functionally, catalyzes one step in the degradation of the inhibitory neurotransmitter gamma-aminobutyric acid (GABA). This is Succinate-semialdehyde dehydrogenase, mitochondrial (Aldh5a1) from Mus musculus (Mouse).